A 66-amino-acid polypeptide reads, in one-letter code: Large ribosomal subunit protein bL31 (66 aa).

Residues cysteine 16, cysteine 18, cysteine 36, and cysteine 39 each contribute to the Zn(2+) site.

The protein belongs to the bacterial ribosomal protein bL31 family. Type A subfamily. As to quaternary structure, part of the 50S ribosomal subunit. The cofactor is Zn(2+).

Functionally, binds the 23S rRNA. The chain is Large ribosomal subunit protein bL31 from Anoxybacillus flavithermus (strain DSM 21510 / WK1).